The following is a 717-amino-acid chain: Homeobox protein araucan (717 aa).

7 disordered regions span residues 46-80 (APAMSPTGGQDCQGSQPSGGAGGDASSGALSPNAL), 94-130 (GGSSAGGGGPADLATGGSLDGNGVGTTPTAGGAGGGG), 317-371 (NKMT…AIDE), 395-418 (SGGYPGGGGSSSGHPGGYHPYHHQ), 478-516 (TPPPAYMGHQSMPLQQQQQQQQQQQQAQHQYPPSEAGRD), 549-615 (TNNS…ASQR), and 675-717 (ARLG…KFTN). A compositionally biased stretch (gly residues) spans 94–103 (GGSSAGGGGP). The segment at residues 255 to 317 (LAARRKNATR…NARRRLKKEN (63 aa)) is a DNA-binding region (homeobox; TALE-type). The segment covering 317-327 (NKMTWEPKNRT) has biased composition (basic and acidic residues). Ser336 is modified (phosphoserine). Residues 337-347 (DDEKDKEDLEP) are compositionally biased toward basic and acidic residues. Over residues 395–410 (SGGYPGGGGSSSGHPG) the composition is skewed to gly residues. 4 stretches are compositionally biased toward low complexity: residues 492 to 507 (QQQQQQQQQQQQAQHQ), 559 to 589 (PPQQQQPQQQQQQLQQGGTIHTTGSSSGPII), 599 to 614 (QQQQQLQQQSQSTASQ), and 687 to 698 (SSGNSSSSSSSS).

This sequence belongs to the TALE/IRO homeobox family.

It is found in the nucleus. Controls proneural and vein forming genes. Positive transcriptional controller of AC-SC (achaete-scute). May act as an activator that interacts with the transcriptional complex assembled on the AC and SC promoters and participates in transcription initiation. This is Homeobox protein araucan (ara) from Drosophila melanogaster (Fruit fly).